A 413-amino-acid polypeptide reads, in one-letter code: Serine hydroxymethyltransferase (413 aa).

(6S)-5,6,7,8-tetrahydrofolate-binding positions include Leu-119 and 123–125; that span reads GHL. Residue Lys-228 is modified to N6-(pyridoxal phosphate)lysine.

Belongs to the SHMT family. As to quaternary structure, homodimer. Pyridoxal 5'-phosphate is required as a cofactor.

It localises to the cytoplasm. It catalyses the reaction (6R)-5,10-methylene-5,6,7,8-tetrahydrofolate + glycine + H2O = (6S)-5,6,7,8-tetrahydrofolate + L-serine. Its pathway is one-carbon metabolism; tetrahydrofolate interconversion. It participates in amino-acid biosynthesis; glycine biosynthesis; glycine from L-serine: step 1/1. Functionally, catalyzes the reversible interconversion of serine and glycine with tetrahydrofolate (THF) serving as the one-carbon carrier. This reaction serves as the major source of one-carbon groups required for the biosynthesis of purines, thymidylate, methionine, and other important biomolecules. Also exhibits THF-independent aldolase activity toward beta-hydroxyamino acids, producing glycine and aldehydes, via a retro-aldol mechanism. This Desulfatibacillum aliphaticivorans protein is Serine hydroxymethyltransferase.